An 807-amino-acid chain; its full sequence is Tyrosine-protein kinase receptor torso (807 aa).

An N-terminal signal peptide occupies residues 1-28 (MYSEGKLLKVFLIFAGFIIFSLCGEVVS). Over 29 to 370 (QRYPPAPGLL…RAFTPGMLRW (342 aa)) the chain is Extracellular. 4 disulfide bridges follow: Cys-46–Cys-61, Cys-81–Cys-203, Cys-210–Cys-239, and Cys-259–Cys-265. Residues Asn-54, Asn-171, Asn-183, and Asn-195 are each glycosylated (N-linked (GlcNAc...) asparagine). N-linked (GlcNAc...) asparagine glycans are attached at residues Asn-307, Asn-323, and Asn-344. Residues 371–391 (VWAGATAGAGCAAGGLLAATL) traverse the membrane as a helical segment. At 392-807 (LCCGHRRATS…SPPVIQTKTA (416 aa)) the chain is on the cytoplasmic side. Residues 439-738 (VLLHEVIGEG…PTFPELHQKL (300 aa)) form the Protein kinase domain. Residues 445 to 453 (IGEGAFGVV) and Lys-468 contribute to the ATP site. Asp-607 acts as the Proton acceptor in catalysis.

Belongs to the protein kinase superfamily. Tyr protein kinase family. As to quaternary structure, homodimer; disulfide-linked. Mg(2+) is required as a cofactor. Post-translationally, may be auto-phosphorylated on tyrosine residues. In terms of processing, at least one of the 3 cysteine residues Cys-381, Cys-393 or Cys-394 is involved in the formation of interchain disulfide bonds. The disulfide bond sites in the extracellular region are not involved in homodimer formation.

Its subcellular location is the cell membrane. It catalyses the reaction L-tyrosyl-[protein] + ATP = O-phospho-L-tyrosyl-[protein] + ADP + H(+). Its function is as follows. Probable receptor tyrosine kinase. During postembryonic development, involved in the initiation of metamorphosis probably by inducing the production of ecdysone in response to prothoracicotropic hormone (PTTH). Binding to PTTH stimulates activation of canonical MAPK signaling leading to ERK phosphorylation. The protein is Tyrosine-protein kinase receptor torso of Bombyx mori (Silk moth).